The sequence spans 95 residues: Small ribosomal subunit protein bS18 (95 aa).

Belongs to the bacterial ribosomal protein bS18 family. In terms of assembly, part of the 30S ribosomal subunit. Forms a tight heterodimer with protein bS6.

Functionally, binds as a heterodimer with protein bS6 to the central domain of the 16S rRNA, where it helps stabilize the platform of the 30S subunit. In Rickettsia akari (strain Hartford), this protein is Small ribosomal subunit protein bS18.